A 710-amino-acid polypeptide reads, in one-letter code: Early transcription factor 82 kDa subunit (710 aa).

Belongs to the poxviridae VETF large subunit family. As to quaternary structure, heterodimer of a 70 kDa and a 82 kDa subunit. Part of the early transcription complex composed of ETF, RAP94/OPG109, and the DNA-directed RNA polymerase.

Its subcellular location is the virion. Acts with RNA polymerase to initiate transcription from early gene promoters. Is recruited by the RPO-associated protein of 94 kDa RAP94/OPG109 to form the early transcription complex, which also contains the core RNA polymerase. ETF heterodimer binds to early gene promoters. This is Early transcription factor 82 kDa subunit (OPG133) from Homo sapiens (Human).